The sequence spans 267 residues: Phosphoethanolamine/phosphocholine phosphatase (267 aa).

D32 acts as the Nucleophile in catalysis. Residues D32 and D34 each contribute to the Mg(2+) site. Catalysis depends on D34, which acts as the Proton donor. D43 and D123 together coordinate substrate. D203 serves as a coordination point for Mg(2+).

This sequence belongs to the HAD-like hydrolase superfamily. PHOSPHO family. Mg(2+) serves as cofactor. In terms of tissue distribution, expressed at sites of mineralization in bone and cartilage. Highly expressed in osteoblast cell line SaOS-2 which produces a mineralized matrix, but not in MG-63 cell line, which do not mineralize.

It is found in the extracellular vesicle. It carries out the reaction phosphoethanolamine + H2O = ethanolamine + phosphate. The enzyme catalyses phosphocholine + H2O = choline + phosphate. Functionally, phosphatase that has a high activity toward phosphoethanolamine (PEA) and phosphocholine (PCho). Involved in the generation of inorganic phosphate for bone mineralization. Acts in a non-redundant manner with PHOSPHO1 in skeletal mineralization: while PHOSPHO1 mediates the initiation of hydroxyapatite crystallization in the matrix vesicles (MVs), ALPL/TNAP catalyzes the spread of hydroxyapatite crystallization in the extracellular matrix. The chain is Phosphoethanolamine/phosphocholine phosphatase from Homo sapiens (Human).